The following is a 180-amino-acid chain: Probable macrolide acetyltransferase (180 aa).

This sequence belongs to the transferase hexapeptide repeat family.

This chain is Probable macrolide acetyltransferase, found in Lysinibacillus sphaericus (Bacillus sphaericus).